We begin with the raw amino-acid sequence, 428 residues long: Histidinol dehydrogenase (428 aa).

Residues Tyr-124, Gln-186, and Asn-209 each contribute to the NAD(+) site. Residues Ser-233, Gln-255, and His-258 each contribute to the substrate site. Residues Gln-255 and His-258 each coordinate Zn(2+). Active-site proton acceptor residues include Glu-322 and His-323. His-323, Asp-356, Glu-410, and His-415 together coordinate substrate. Zn(2+) is bound at residue Asp-356. Residue His-415 participates in Zn(2+) binding.

The protein belongs to the histidinol dehydrogenase family. Requires Zn(2+) as cofactor.

The catalysed reaction is L-histidinol + 2 NAD(+) + H2O = L-histidine + 2 NADH + 3 H(+). It participates in amino-acid biosynthesis; L-histidine biosynthesis; L-histidine from 5-phospho-alpha-D-ribose 1-diphosphate: step 9/9. Its function is as follows. Catalyzes the sequential NAD-dependent oxidations of L-histidinol to L-histidinaldehyde and then to L-histidine. This Bacteroides fragilis (strain YCH46) protein is Histidinol dehydrogenase.